The chain runs to 264 residues: Thymidylate synthase (264 aa).

Residue Arg21 coordinates dUMP. A (6R)-5,10-methylene-5,6,7,8-tetrahydrofolate-binding site is contributed by His51. 126 to 127 (RR) contributes to the dUMP binding site. Cys146 acts as the Nucleophile in catalysis. DUMP is bound by residues 166-169 (RSAD), Asn177, and 207-209 (HLY). Residue Asp169 coordinates (6R)-5,10-methylene-5,6,7,8-tetrahydrofolate. Ala263 contacts (6R)-5,10-methylene-5,6,7,8-tetrahydrofolate.

It belongs to the thymidylate synthase family. Bacterial-type ThyA subfamily. Homodimer.

The protein localises to the cytoplasm. It catalyses the reaction dUMP + (6R)-5,10-methylene-5,6,7,8-tetrahydrofolate = 7,8-dihydrofolate + dTMP. It functions in the pathway pyrimidine metabolism; dTTP biosynthesis. Its function is as follows. Catalyzes the reductive methylation of 2'-deoxyuridine-5'-monophosphate (dUMP) to 2'-deoxythymidine-5'-monophosphate (dTMP) while utilizing 5,10-methylenetetrahydrofolate (mTHF) as the methyl donor and reductant in the reaction, yielding dihydrofolate (DHF) as a by-product. This enzymatic reaction provides an intracellular de novo source of dTMP, an essential precursor for DNA biosynthesis. The chain is Thymidylate synthase from Rhodopirellula baltica (strain DSM 10527 / NCIMB 13988 / SH1).